The chain runs to 381 residues: 4-hydroxy-3-methylbut-2-en-1-yl diphosphate synthase (flavodoxin) (381 aa).

C273, C276, C308, and E315 together coordinate [4Fe-4S] cluster.

Belongs to the IspG family. [4Fe-4S] cluster is required as a cofactor.

It carries out the reaction (2E)-4-hydroxy-3-methylbut-2-enyl diphosphate + oxidized [flavodoxin] + H2O + 2 H(+) = 2-C-methyl-D-erythritol 2,4-cyclic diphosphate + reduced [flavodoxin]. It participates in isoprenoid biosynthesis; isopentenyl diphosphate biosynthesis via DXP pathway; isopentenyl diphosphate from 1-deoxy-D-xylulose 5-phosphate: step 5/6. Its function is as follows. Converts 2C-methyl-D-erythritol 2,4-cyclodiphosphate (ME-2,4cPP) into 1-hydroxy-2-methyl-2-(E)-butenyl 4-diphosphate. This is 4-hydroxy-3-methylbut-2-en-1-yl diphosphate synthase (flavodoxin) from Gluconobacter oxydans (strain 621H) (Gluconobacter suboxydans).